The following is a 214-amino-acid chain: Ribonuclease HII (214 aa).

Positions 26–214 (EIVCGVDEAG…PVREAFDLIR (189 aa)) constitute an RNase H type-2 domain. Residues Asp-32, Glu-33, and Asp-124 each coordinate a divalent metal cation.

This sequence belongs to the RNase HII family. Mn(2+) serves as cofactor. Mg(2+) is required as a cofactor.

The protein localises to the cytoplasm. It carries out the reaction Endonucleolytic cleavage to 5'-phosphomonoester.. In terms of biological role, endonuclease that specifically degrades the RNA of RNA-DNA hybrids. The sequence is that of Ribonuclease HII from Burkholderia pseudomallei (strain 1710b).